Reading from the N-terminus, the 314-residue chain is Zinc-binding alcohol dehydrogenase domain-containing protein cipB (314 aa).

The protein belongs to the zinc-containing alcohol dehydrogenase family.

Functionally, involved in osmoadaptation. This chain is Zinc-binding alcohol dehydrogenase domain-containing protein cipB (cipB), found in Emericella nidulans (strain FGSC A4 / ATCC 38163 / CBS 112.46 / NRRL 194 / M139) (Aspergillus nidulans).